The following is an 81-amino-acid chain: Protein K6 (81 aa).

It belongs to the poxviridae K6 protein family.

The sequence is that of Protein K6 from Homo sapiens (Human).